Consider the following 356-residue polypeptide: Syntaxin-7A (356 aa).

Residues methionine 1–cysteine 333 are Cytoplasmic-facing. Composition is skewed to low complexity over residues asparagine 32–asparagine 74 and asparagine 207–glutamine 224. Disordered regions lie at residues asparagine 32–tyrosine 88 and glutamate 187–glutamine 247. A compositionally biased stretch (basic and acidic residues) spans glutamate 233 to arginine 244. One can recognise a t-SNARE coiled-coil homology domain in the interval asparagine 259–alanine 321. A helical; Anchor for type IV membrane protein transmembrane segment spans residues tryptophan 334–leucine 354. Residues arginine 355–lysine 356 are Vesicular-facing.

This sequence belongs to the syntaxin family. As to quaternary structure, component of the SNARE complex composed of syn7A, syn8A, vamp7A and vti1A. Interacts with nsfA, snpA and snpC.

The protein localises to the endosome membrane. Its function is as follows. Involved in the targeting and/or fusion of transport vesicles to their target membrane during transport of proteins from the early endosome to the lysosome. Required for fusion of late endosomes with lysosomes and homotypic lysosomal fusion. May be involved in protein trafficking from the plasma membrane to the early endosome (EE) as well as in homotypic fusion of endocytic organelles. This chain is Syntaxin-7A, found in Dictyostelium discoideum (Social amoeba).